Here is a 121-residue protein sequence, read N- to C-terminus: MKLLVAPESIKTMTSCPAICPLILMDLSQLLNLPSTAKTTRVIPLLHPHLILLSFSLFQLHQPHPTHLLHPQPYTLILCPYICDQDSTCHHNENKAPCSFYPDQTVSGMVPFYVLGIGRAR.

The protein resides in the mitochondrion. This is an uncharacterized protein from Arabidopsis thaliana (Mouse-ear cress).